Here is a 520-residue protein sequence, read N- to C-terminus: Cobalt-zinc-cadmium resistance protein CzcB (520 aa).

Residues 9 to 29 traverse the membrane as a helical segment; sequence AAIAAIVLVGGVATGGVLLSG. A disordered region spans residues 28 to 85; the sequence is SGRSAPEEQGGHSESKGHGDTEHHGKQAAEADHKDDKSHGDGEHHEVKKGPNGGALFS. The span at 32-76 shows a compositional bias: basic and acidic residues; that stretch reads APEEQGGHSESKGHGDTEHHGKQAAEADHKDDKSHGDGEHHEVKK. Residues 286–320 are a coiled coil; the sequence is EQKISAEQDYLSARNALQEAQISVQNAQQKLTAIG.

It belongs to the membrane fusion protein (MFP) (TC 8.A.1) family.

The protein localises to the cell inner membrane. Functionally, czcA and CzcB together would act in zinc efflux nearly as effectively as the complete czc efflux system (CzcABC). The CzcB protein is thought to funnel zinc cations to the CzcA transport protein. The sequence is that of Cobalt-zinc-cadmium resistance protein CzcB (czcB) from Cupriavidus metallidurans (strain ATCC 43123 / DSM 2839 / NBRC 102507 / CH34) (Ralstonia metallidurans).